The sequence spans 308 residues: tRNA dimethylallyltransferase (308 aa).

10–17 provides a ligand contact to ATP; sequence GPTASGKT. 12 to 17 lines the substrate pocket; sequence TASGKT. Interaction with substrate tRNA regions lie at residues 35 to 38 and 159 to 163; these read DSSL and QRIFR.

The protein belongs to the IPP transferase family. Monomer. Mg(2+) is required as a cofactor.

The catalysed reaction is adenosine(37) in tRNA + dimethylallyl diphosphate = N(6)-dimethylallyladenosine(37) in tRNA + diphosphate. Its function is as follows. Catalyzes the transfer of a dimethylallyl group onto the adenine at position 37 in tRNAs that read codons beginning with uridine, leading to the formation of N6-(dimethylallyl)adenosine (i(6)A). In Francisella philomiragia subsp. philomiragia (strain ATCC 25017 / CCUG 19701 / FSC 153 / O#319-036), this protein is tRNA dimethylallyltransferase.